A 216-amino-acid chain; its full sequence is Uracil phosphoribosyltransferase (216 aa).

5-phospho-alpha-D-ribose 1-diphosphate-binding positions include Arg-85, Arg-110, and 135–143 (DPMVATGYS). Uracil contacts are provided by residues Ile-200 and 205–207 (GDA). Position 206 (Asp-206) interacts with 5-phospho-alpha-D-ribose 1-diphosphate.

This sequence belongs to the UPRTase family. Mg(2+) serves as cofactor.

The catalysed reaction is UMP + diphosphate = 5-phospho-alpha-D-ribose 1-diphosphate + uracil. It participates in pyrimidine metabolism; UMP biosynthesis via salvage pathway; UMP from uracil: step 1/1. Its activity is regulated as follows. Allosterically activated by GTP. Functionally, catalyzes the conversion of uracil and 5-phospho-alpha-D-ribose 1-diphosphate (PRPP) to UMP and diphosphate. This Burkholderia cenocepacia (strain ATCC BAA-245 / DSM 16553 / LMG 16656 / NCTC 13227 / J2315 / CF5610) (Burkholderia cepacia (strain J2315)) protein is Uracil phosphoribosyltransferase.